We begin with the raw amino-acid sequence, 180 residues long: Protein PHLOEM PROTEIN 2-LIKE A9 (180 aa).

The disordered stretch occupies residues 1-21; the sequence is MSSQKSSHHKADSKMEQDNNR. Residues 9-21 show a composition bias toward basic and acidic residues; sequence HKADSKMEQDNNR.

The sequence is that of Protein PHLOEM PROTEIN 2-LIKE A9 (PP2A9) from Arabidopsis thaliana (Mouse-ear cress).